Consider the following 209-residue polypeptide: MPLQVKYLGLQPYESTWEAMQRFTNERTEHTPDELWVVEHPPVFTQGLNGQAKHLQAFALEQNIPIIQTDRGGQVTYHGPGQIIIYVLLDLKRAQLGVRDLVHRMEKAIIEFLCDLSISADARPDAPGVYVDGQKIASLGLKIRKQKSYHGLALNFDMDLTPFSWITPCGLEGIQMTQVSHFIQQPDQLASQTALIKALCHQLQPEIDS.

The region spanning 29-209 (EHTPDELWVV…CHQLQPEIDS (181 aa)) is the BPL/LPL catalytic domain. Substrate is bound by residues 71–78 (RGGQVTYH), 138–140 (SLG), and 151–153 (GLA). The Acyl-thioester intermediate role is filled by Cys-169.

This sequence belongs to the LipB family.

The protein resides in the cytoplasm. It carries out the reaction octanoyl-[ACP] + L-lysyl-[protein] = N(6)-octanoyl-L-lysyl-[protein] + holo-[ACP] + H(+). It functions in the pathway protein modification; protein lipoylation via endogenous pathway; protein N(6)-(lipoyl)lysine from octanoyl-[acyl-carrier-protein]: step 1/2. Its function is as follows. Catalyzes the transfer of endogenously produced octanoic acid from octanoyl-acyl-carrier-protein onto the lipoyl domains of lipoate-dependent enzymes. Lipoyl-ACP can also act as a substrate although octanoyl-ACP is likely to be the physiological substrate. This is Octanoyltransferase from Hydrogenovibrio crunogenus (strain DSM 25203 / XCL-2) (Thiomicrospira crunogena).